The sequence spans 115 residues: U3-lycotoxin-Ls1i (115 aa).

The signal sequence occupies residues 1–20 (MKFVLLFGVFLVTLFSYSSA). A propeptide spanning residues 21–44 (EMLDDFDQADEDELLSLIEKEEAR) is cleaved from the precursor. 4 disulfide bridges follow: cysteine 48–cysteine 63, cysteine 55–cysteine 72, cysteine 62–cysteine 87, and cysteine 74–cysteine 85.

The protein belongs to the neurotoxin 19 (CSTX) family. 01 subfamily. As to expression, expressed by the venom gland.

It localises to the secreted. The polypeptide is U3-lycotoxin-Ls1i (Lycosa singoriensis (Wolf spider)).